The chain runs to 885 residues: DNA mismatch repair protein MutS (885 aa).

The disordered stretch occupies residues 1-67; sequence MAPGEQQLSL…SNNDDEGLPR (67 aa). Over residues 26 to 36 the composition is skewed to basic and acidic residues; it reads SEDKTEESERP. 691–698 lines the ATP pocket; the sequence is GPNASGKS.

This sequence belongs to the DNA mismatch repair MutS family.

In terms of biological role, this protein is involved in the repair of mismatches in DNA. It is possible that it carries out the mismatch recognition step. This protein has a weak ATPase activity. The sequence is that of DNA mismatch repair protein MutS from Synechococcus sp. (strain RCC307).